A 293-amino-acid chain; its full sequence is 33 kDa chaperonin (293 aa).

2 cysteine pairs are disulfide-bonded: cysteine 237/cysteine 239 and cysteine 271/cysteine 274.

This sequence belongs to the HSP33 family. Under oxidizing conditions two disulfide bonds are formed involving the reactive cysteines. Under reducing conditions zinc is bound to the reactive cysteines and the protein is inactive.

It is found in the cytoplasm. Functionally, redox regulated molecular chaperone. Protects both thermally unfolding and oxidatively damaged proteins from irreversible aggregation. Plays an important role in the bacterial defense system toward oxidative stress. In Haemophilus influenzae (strain ATCC 51907 / DSM 11121 / KW20 / Rd), this protein is 33 kDa chaperonin.